The chain runs to 378 residues: MQAFLVILFMVVVGAVIGGVTNVIAIRMLFHPFKPYYIFKMRIPFTPGLIPKRREEIATKIGQVIEEHLITESVILQKLNEPNTREAINDLVIKQLSKLKSDDATIRKFANQFDFDLDLDDLINNKLDKTIINKLNNYYYDKQATSINEILPADVITMVDEKLDQAGDLIRERARNYLSSDKGARDIYDMLDTFFAEKGKIVGLLQMFMTKESIAERVQHELIRLTRHPKAKVIIDKVIRDEYETLKSQPLSHVVKEEQFTNISESLVHLVITNLQLNEKMDTPISKLTPKLVDQIQVGVANTITDLIIKQASNHLSTIMTKINLRQMVENQINTFDLDYIERLIIEIANKELKLIMSLGFILGGIIGFFQGIVAIFV.

2 consecutive transmembrane segments (helical) span residues 4 to 24 and 358 to 378; these read FLVILFMVVVGAVIGGVTNVI and SLGFILGGIIGFFQGIVAIFV.

The protein belongs to the UPF0754 family.

The protein localises to the cell membrane. The chain is UPF0754 membrane protein SH1116 from Staphylococcus haemolyticus (strain JCSC1435).